A 465-amino-acid chain; its full sequence is Protein maelstrom (465 aa).

Residues 2–69 (APKKHSGFMM…ADRGKRERLN (68 aa)) constitute a DNA-binding region (HMG box). The disordered stretch occupies residues 415-440 (MRKSSKHTGPSVSTQRERNAGAWNLP).

It belongs to the maelstrom family.

It is found in the cytoplasm. The protein resides in the nucleus. Its function is as follows. Involved both in the piRNA and miRNA metabolic processes. As a component of the meiotic nuage, plays a central role during oogenesis by repressing transposable elements and preventing their mobilization, which is essential for the germline integrity. Repression of transposable elements is mediated via the piRNA metabolic process, which mediates the repression of transposable elements during meiosis by forming complexes composed of piRNAs and Piwi proteins and governs the repression of transposons. As a nuclear component, it is required for proper differentiation in the germline stem cell (GSC) lineage by repressing microRNA-7 (miR-7), thereby acting as an indirect regulator of bag-of-marbles (Bam). Acts by binding to the promoter of miR-7 gene and repressing its expression; miR-7 repression alleviates the Bam repression by miR-7, thereby allowing differentiation in the germline stem cell (GSC) lineage. The chain is Protein maelstrom (mael) from Drosophila yakuba (Fruit fly).